A 421-amino-acid chain; its full sequence is MLKEEDKIFINLYGQQSYDLKSSKKRGDWYNTKALLDKGRDFIIDEVKKSGLRGRGGAGFSTGMKWSFMPKNSEKPCYLVVNADESEPGTCKDRDILRFEPHKLIEGCLIASFAIGANNCYIYIRGEFYNEASNMQRALDEAYTEGLIGKNACGSGFDCNIYLHRGAGAYICGEETALLESLEGKKGMPRLKPPFPAGFGLYGCPTTINNVESIAVVPTILRRGASWFAAIGKPNNTGTKIFCISGHVNKPCNIEEAMGIPLKELIEKYAGGVRGGWDNLKAIIPGGASVPLLPKSLCEVEMDFDSLRTVGSGLGTGGIIVMDRSTDIIYAIARLSKFYMHESCGQCTPCREGTGWMWRVMMRLVNGNAKKTEIETLLNVTKEIEGHTICALGDAAAWPIQGLIRHFRDEIEERIKNFGIA.

54–63 serves as a coordination point for NAD(+); that stretch reads GRGGAGFSTG. 166 to 213 contacts FMN; it reads GAGAYICGEETALLESLEGKKGMPRLKPPFPAGFGLYGCPTTINNVES. Positions 344, 347, 350, and 390 each coordinate [4Fe-4S] cluster.

It belongs to the complex I 51 kDa subunit family. Requires FMN as cofactor. The cofactor is [4Fe-4S] cluster.

It catalyses the reaction a quinone + NADH + 5 H(+)(in) = a quinol + NAD(+) + 4 H(+)(out). NDH-1 shuttles electrons from NADH, via FMN and iron-sulfur (Fe-S) centers, to quinones in the respiratory chain. Couples the redox reaction to proton translocation (for every two electrons transferred, four hydrogen ions are translocated across the cytoplasmic membrane), and thus conserves the redox energy in a proton gradient. This chain is NADH-quinone oxidoreductase subunit F (nuoF), found in Rickettsia typhi (strain ATCC VR-144 / Wilmington).